Reading from the N-terminus, the 183-residue chain is V-type ATP synthase subunit E (183 aa).

This sequence belongs to the V-ATPase E subunit family.

Produces ATP from ADP in the presence of a proton gradient across the membrane. The polypeptide is V-type ATP synthase subunit E (Fusobacterium nucleatum subsp. nucleatum (strain ATCC 25586 / DSM 15643 / BCRC 10681 / CIP 101130 / JCM 8532 / KCTC 2640 / LMG 13131 / VPI 4355)).